Reading from the N-terminus, the 174-residue chain is MIKSQVGRRYSKAIFEIAEEKKQVKEIYEMLNSAMVLYRTDKEFKHFILNPLIDNEQKKSVLNEIFGKDNSENLNILLYILDKGRMNCIKYIVAEYLKIYYRKNRILDVKATFTKELTDEQKKKLIDKLSQKTGKEINLEIKIDKDILGGGIIKIGDKIIDGSIRRELDNWRKS.

The protein belongs to the ATPase delta chain family. F-type ATPases have 2 components, F(1) - the catalytic core - and F(0) - the membrane proton channel. F(1) has five subunits: alpha(3), beta(3), gamma(1), delta(1), epsilon(1). F(0) has three main subunits: a(1), b(2) and c(10-14). The alpha and beta chains form an alternating ring which encloses part of the gamma chain. F(1) is attached to F(0) by a central stalk formed by the gamma and epsilon chains, while a peripheral stalk is formed by the delta and b chains.

It localises to the cell inner membrane. Functionally, f(1)F(0) ATP synthase produces ATP from ADP in the presence of a proton or sodium gradient. F-type ATPases consist of two structural domains, F(1) containing the extramembraneous catalytic core and F(0) containing the membrane proton channel, linked together by a central stalk and a peripheral stalk. During catalysis, ATP synthesis in the catalytic domain of F(1) is coupled via a rotary mechanism of the central stalk subunits to proton translocation. Its function is as follows. This protein is part of the stalk that links CF(0) to CF(1). It either transmits conformational changes from CF(0) to CF(1) or is implicated in proton conduction. This chain is ATP synthase subunit delta, found in Fusobacterium nucleatum subsp. nucleatum (strain ATCC 25586 / DSM 15643 / BCRC 10681 / CIP 101130 / JCM 8532 / KCTC 2640 / LMG 13131 / VPI 4355).